The chain runs to 117 residues: Gamma-aminobutyric acid receptor-associated protein-like 1 (117 aa).

Glycine 116 carries the Phosphatidylethanolamine amidated glycine; alternate lipid modification. The Phosphatidylserine amidated glycine; alternate moiety is linked to residue glycine 116. Residue lysine 117 is a propeptide, removed in mature form.

It belongs to the ATG8 family. Interacts with ATG13, OPRK1, RB1CC1 and ULK1. Interacts with TP53INP1 and TP53INP2. Directly interacts with SQSTM1. Interacts with ATG3, ATG7 and MAP15. Interacts with TECPR2. Interacts with TBC1D5. Interacts with MAPK15. Interacts with TRIM5. Interacts with MEFV and TRIM21. Interacts with WDFY3. Interacts with the reticulophagy receptor TEX264. Interacts with UBA5. Interacts with KBTBD6 and KBTBD7; the interaction is direct. Interacts with reticulophagy regulators RETREG1, RETREG2 and RETREG3. Interacts with IRGM. Interacts with DNM2. Interacts with NCOA4 (via C-terminus). The precursor molecule is cleaved by ATG4 (ATG4A, ATG4B, ATG4C or ATG4D) to expose the glycine at the C-terminus and form the cytosolic form, GABARAPL1-I. The processed form is then activated by APG7L/ATG7, transferred to ATG3 and conjugated to phosphatidylethanolamine (PE) phospholipid to form the membrane-bound form, GABARAPL1-II. During non-canonical autophagy, the processed form is conjugated to phosphatidylserine (PS) phospholipid. ATG4 proteins also mediate the delipidation of PE-conjugated forms required for GABARAPL1 recycling when autophagosomes fuse with lysosomes. In addition, ATG4B and ATG4D mediate delipidation of ATG8 proteins conjugated to PS during non-canonical autophagy. ATG4B constitutes the major protein for proteolytic activation. ATG4D is the main enzyme for delipidation activity.

It is found in the cytoplasmic vesicle. The protein localises to the autophagosome. It localises to the cytoplasmic vesicle membrane. The protein resides in the cytoplasm. Its subcellular location is the cytoskeleton. It is found in the endoplasmic reticulum. The protein localises to the golgi apparatus. Its function is as follows. Ubiquitin-like modifier that increases cell-surface expression of kappa-type opioid receptor through facilitating anterograde intracellular trafficking of the receptor. Involved in formation of autophagosomal vacuoles. While LC3s are involved in elongation of the phagophore membrane, the GABARAP/GATE-16 subfamily is essential for a later stage in autophagosome maturation. Through its interaction with the reticulophagy receptor TEX264, participates in the remodeling of subdomains of the endoplasmic reticulum into autophagosomes upon nutrient stress, which then fuse with lysosomes for endoplasmic reticulum turnover. This is Gamma-aminobutyric acid receptor-associated protein-like 1 from Pongo abelii (Sumatran orangutan).